Here is a 1243-residue protein sequence, read N- to C-terminus: Probable phospholipid-transporting ATPase 7 (1243 aa).

At 1–74 the chain is on the cytoplasmic side; sequence MGRRRIRSRI…TTRYNLITFL (74 aa). The chain crosses the membrane as a helical span at residues 75–96; the sequence is PKCLYEQFHRVANFYFLVAAIL. Residues 97-100 lie on the Extracellular side of the membrane; sequence SVFP. Residues 101 to 123 traverse the membrane as a helical segment; it reads LSPFNKWSMIAPLIFVVGLSMGK. Residues 124–305 are Cytoplasmic-facing; it reads EALEDWRRFM…SRIEKRMDYI (182 aa). The chain crosses the membrane as a helical span at residues 306–327; sequence IYTLFALLVLVSFISSLGFAVM. Topologically, residues 328–359 are extracellular; sequence TKMHMGDWWYLRPDKPERLTNPRNPFHAWVVH. Residues 360–377 traverse the membrane as a helical segment; that stretch reads LITAVLLYGYLIPISLYV. Over 378 to 941 the chain is Cytoplasmic; sequence SIELVKVLQA…HGHWCYKRIA (564 aa). Asp425 functions as the 4-aspartylphosphate intermediate in the catalytic mechanism. Lys623 is covalently cross-linked (Glycyl lysine isopeptide (Lys-Gly) (interchain with G-Cter in ubiquitin)). Residues Asp886 and Asp890 each coordinate Mg(2+). A helical transmembrane segment spans residues 942-961; sequence QMICYFFYKNITFGLTLFYF. Topologically, residues 962–975 are extracellular; the sequence is EAFTGFSGQAIYND. Residues 976–995 form a helical membrane-spanning segment; it reads SYLLLFNVILTSLPVIALGV. The Cytoplasmic segment spans residues 996–1025; that stretch reads FEQDVSSEVCLQFPALYQQGPKNLFFDWYR. The chain crosses the membrane as a helical span at residues 1026-1048; it reads IIGWMANGVYASVVIFSLNIGIF. Residues 1049 to 1061 lie on the Extracellular side of the membrane; that stretch reads HVQSFCSGGQTAD. The helical transmembrane segment at 1062–1084 threads the bilayer; that stretch reads MDAMGTAMFTCIIWAVNVQIALT. Topologically, residues 1085–1090 are cytoplasmic; sequence MSHFTW. The chain crosses the membrane as a helical span at residues 1091 to 1111; that stretch reads IQHVLIWGSIVTWYIFLALFG. Residues 1112–1128 are Extracellular-facing; the sequence is MLPPKVSGNIFHMLSET. The helical transmembrane segment at 1129–1153 threads the bilayer; that stretch reads LAPAPIFWLTSLLVIAATTLPYLAY. The Cytoplasmic segment spans residues 1154–1243; the sequence is ISFQRSLNPL…TDTTSTTQHS (90 aa).

The protein belongs to the cation transport ATPase (P-type) (TC 3.A.3) family. Type IV subfamily.

Its subcellular location is the cell membrane. It localises to the endomembrane system. It carries out the reaction ATP + H2O + phospholipidSide 1 = ADP + phosphate + phospholipidSide 2.. Functionally, involved in transport of phospholipids and in regulation of pollen plasma membrane lipid asymmetry. In Arabidopsis thaliana (Mouse-ear cress), this protein is Probable phospholipid-transporting ATPase 7.